The primary structure comprises 210 residues: HTH-type transcriptional repressor FabR (210 aa).

Residues 10–70 (KTRRSLVEAA…TMVDESGLML (61 aa)) enclose the HTH tetR-type domain. Positions 33–52 (SLREVAREAGIAPTSFYRHF) form a DNA-binding region, H-T-H motif.

As to quaternary structure, homodimer.

Its subcellular location is the cytoplasm. Functionally, represses the transcription of fabB, involved in unsaturated fatty acid (UFA) biosynthesis. By controlling UFA production, FabR directly influences the physical properties of the membrane bilayer. The sequence is that of HTH-type transcriptional repressor FabR from Salmonella paratyphi A (strain ATCC 9150 / SARB42).